The primary structure comprises 1430 residues: Bromodomain-containing protein homolog (1430 aa).

The C2H2-type zinc finger occupies 23–49; the sequence is FACPVRGCDRSYKTIMGLQYHLMKYDH. Residues 51 to 111 are disordered; sequence NPQPLTPVLT…AGGGSASGVS (61 aa). The span at 62-81 shows a compositional bias: basic residues; that stretch reads SRKKARSRSGGHHSTPRPHK. The PHD-type 1 zinc finger occupies 283–333; sequence DAVCCICLDGECQNTNVILFCDMCNLAVHQDCYGVPYIPEGQWLCRRCLQS. 8 residues coordinate Zn(2+): Cys286, Cys289, Cys303, Cys306, His311, Cys314, Cys327, and Cys330. The C2HC pre-PHD-type zinc-finger motif lies at 337–370; the sequence is PVNCVLCPNAGGAFKQTDHGQWAHVVCALWIPEV. Residues 394–457 form a PHD-type 2 zinc finger; it reads LTCYVCKEKG…QKFAYCHAHT (64 aa). A Bromo domain is found at 611-715; it reads LQLNPLEAAL…DQAAPLFVQV (105 aa). The segment covering 796–805 has biased composition (basic residues); the sequence is KARFAARHSS. Disordered stretches follow at residues 796 to 887, 901 to 942, 1012 to 1054, and 1076 to 1301; these read KARF…SSPV, AQAA…TTAA, ANLP…QALP, and QRDV…GQKP. Residues 842-857 show a composition bias toward acidic residues; sequence HDDDDEEEDSDEDSMG. The span at 865-887 shows a compositional bias: polar residues; it reads LLNSTQTPPCSPIKSLNNSSSPV. 3 stretches are compositionally biased toward low complexity: residues 922–942, 1034–1043, and 1085–1107; these read NSQSSNTQSTSGSSSSVTTAA, SSSMSPKKSP, and APSQSSSPCSSCSDFSMSGSCSD. The span at 1108–1120 shows a compositional bias: acidic residues; that stretch reads FDSDEASEGDADG. Positions 1121 to 1137 are enriched in basic and acidic residues; it reads DPDRDGGRSRSEERDST. Composition is skewed to polar residues over residues 1151 to 1165 and 1265 to 1278; these read ASLNNVQGNNGNMAI and NTTAAGSAPLTNNN. A compositionally biased stretch (basic and acidic residues) spans 1281 to 1293; the sequence is KHSEDSASSERHN. The 74-residue stretch at 1305 to 1378 folds into the PWWP domain; the sequence is PLQLVWAKCR…TWQWLPANKL (74 aa).

In terms of assembly, component of the Enok complex composed of at least Br140, enok, Eaf6 and Ing5. As part of the Enok complex, interacts with elg1 and the Elg1 RFC-like complex.

The protein resides in the nucleus. Scaffold subunit of the histone acetyltransferase (HAT) Enok complex which has histone H3 acetyltransferase activity. As part of the Enok complex, associates with the Elg1 RFC-like complex and down-regulates its PCNA-unloading function to promote the G1/S transition. May also play a role in maintaining the protein levels and stability of enok. This is Bromodomain-containing protein homolog from Drosophila melanogaster (Fruit fly).